The following is a 1068-amino-acid chain: Carbamoyl phosphate synthase large chain (1068 aa).

Residues M1–E401 are carboxyphosphate synthetic domain. 12 residues coordinate ATP: R129, R169, G175, G176, K208, V210, E215, G241, I242, H243, Q284, and E298. Residues R133 to L327 enclose the ATP-grasp 1 domain. The Mg(2+) site is built by Q284, E298, and N300. The Mn(2+) site is built by Q284, E298, and N300. Residues I402 to V549 form an oligomerization domain region. Residues E550–N932 form a carbamoyl phosphate synthetic domain region. The region spanning D674–L864 is the ATP-grasp 2 domain. ATP is bound by residues R710, K749, L751, E755, G780, V781, H782, S783, Q823, and E835. 3 residues coordinate Mg(2+): Q823, E835, and N837. Residues Q823, E835, and N837 each coordinate Mn(2+). One can recognise an MGS-like domain in the interval M933–N1068. The segment at M933–N1068 is allosteric domain.

This sequence belongs to the CarB family. Composed of two chains; the small (or glutamine) chain promotes the hydrolysis of glutamine to ammonia, which is used by the large (or ammonia) chain to synthesize carbamoyl phosphate. Tetramer of heterodimers (alpha,beta)4. Requires Mg(2+) as cofactor. The cofactor is Mn(2+).

The catalysed reaction is hydrogencarbonate + L-glutamine + 2 ATP + H2O = carbamoyl phosphate + L-glutamate + 2 ADP + phosphate + 2 H(+). It carries out the reaction hydrogencarbonate + NH4(+) + 2 ATP = carbamoyl phosphate + 2 ADP + phosphate + 2 H(+). It participates in amino-acid biosynthesis; L-arginine biosynthesis; carbamoyl phosphate from bicarbonate: step 1/1. The protein operates within pyrimidine metabolism; UMP biosynthesis via de novo pathway; (S)-dihydroorotate from bicarbonate: step 1/3. Large subunit of the glutamine-dependent carbamoyl phosphate synthetase (CPSase). CPSase catalyzes the formation of carbamoyl phosphate from the ammonia moiety of glutamine, carbonate, and phosphate donated by ATP, constituting the first step of 2 biosynthetic pathways, one leading to arginine and/or urea and the other to pyrimidine nucleotides. The large subunit (synthetase) binds the substrates ammonia (free or transferred from glutamine from the small subunit), hydrogencarbonate and ATP and carries out an ATP-coupled ligase reaction, activating hydrogencarbonate by forming carboxy phosphate which reacts with ammonia to form carbamoyl phosphate. The protein is Carbamoyl phosphate synthase large chain of Clostridium botulinum (strain Loch Maree / Type A3).